Here is a 498-residue protein sequence, read N- to C-terminus: Probable cytosol aminopeptidase (498 aa).

Residues K267 and D272 each contribute to the Mn(2+) site. K279 is a catalytic residue. Mn(2+)-binding residues include D290, D349, and E351. R353 is an active-site residue.

The protein belongs to the peptidase M17 family. Requires Mn(2+) as cofactor.

Its subcellular location is the cytoplasm. It catalyses the reaction Release of an N-terminal amino acid, Xaa-|-Yaa-, in which Xaa is preferably Leu, but may be other amino acids including Pro although not Arg or Lys, and Yaa may be Pro. Amino acid amides and methyl esters are also readily hydrolyzed, but rates on arylamides are exceedingly low.. It carries out the reaction Release of an N-terminal amino acid, preferentially leucine, but not glutamic or aspartic acids.. Its function is as follows. Presumably involved in the processing and regular turnover of intracellular proteins. Catalyzes the removal of unsubstituted N-terminal amino acids from various peptides. In Dechloromonas aromatica (strain RCB), this protein is Probable cytosol aminopeptidase.